The following is a 445-amino-acid chain: Lateral flagellar hook-associated protein 2 (445 aa).

Residues 388–423 (SGAFKSRKEALQANLDRLSDKQTTLERKYDMSYKRY) adopt a coiled-coil conformation.

This sequence belongs to the FliD family. As to quaternary structure, homopentamer.

It localises to the secreted. The protein resides in the bacterial flagellum. Functionally, required for the morphogenesis and for the elongation of the flagellar filament by facilitating polymerization of the flagellin monomers at the tip of growing filament. Forms a capping structure, which prevents flagellin subunits (transported through the central channel of the flagellum) from leaking out without polymerization at the distal end. Essential for swarming motility. The sequence is that of Lateral flagellar hook-associated protein 2 (fliDL) from Vibrio parahaemolyticus serotype O3:K6 (strain RIMD 2210633).